The sequence spans 145 residues: Protein AggB (145 aa).

An N-terminal signal peptide occupies residues 1–24 (MLKKSILPMSCGVLVMVMSGLLDA).

It to E.coli AfaD.

In Escherichia coli, this protein is Protein AggB (aggB).